We begin with the raw amino-acid sequence, 253 residues long: Hydroxyacylglutathione hydrolase (253 aa).

Zn(2+)-binding residues include His54, His56, Asp58, His59, His110, Asp127, and His165.

This sequence belongs to the metallo-beta-lactamase superfamily. Glyoxalase II family. In terms of assembly, monomer. The cofactor is Zn(2+).

It catalyses the reaction an S-(2-hydroxyacyl)glutathione + H2O = a 2-hydroxy carboxylate + glutathione + H(+). The protein operates within secondary metabolite metabolism; methylglyoxal degradation; (R)-lactate from methylglyoxal: step 2/2. Functionally, thiolesterase that catalyzes the hydrolysis of S-D-lactoyl-glutathione to form glutathione and D-lactic acid. The polypeptide is Hydroxyacylglutathione hydrolase (Idiomarina loihiensis (strain ATCC BAA-735 / DSM 15497 / L2-TR)).